The primary structure comprises 214 residues: MTHITGTLYIISAPSGAGKTSLVKALMDAQQEPQHGAQAKIRVSVSHTTRAMRPGEVNGVNYNFVDRAEFVRMIEHGDFLEQAEVFGNLYGTSQSHLQQTLDEGHDLILEIDWQGARQVRAQMPQARSIFILPPTQQALRQRLTNRGQDSDEIIEARMREAVSEMSHYNEYEYVVVNDDFAGALEDLKAIFRANRLTQQHQQEQYSELFQELLA.

One can recognise a Guanylate kinase-like domain in the interval 6–192 (GTLYIISAPS…ALEDLKAIFR (187 aa)). 13-20 (APSGAGKT) is a binding site for ATP.

Belongs to the guanylate kinase family.

It localises to the cytoplasm. It carries out the reaction GMP + ATP = GDP + ADP. In terms of biological role, essential for recycling GMP and indirectly, cGMP. In Pseudomonas savastanoi pv. phaseolicola (strain 1448A / Race 6) (Pseudomonas syringae pv. phaseolicola (strain 1448A / Race 6)), this protein is Guanylate kinase.